A 247-amino-acid polypeptide reads, in one-letter code: uncharacterized protein (247 aa).

This is an uncharacterized protein from Rickettsia prowazekii (strain Madrid E).